A 180-amino-acid polypeptide reads, in one-letter code: Insulin-like growth factor 2 (180 aa).

An N-terminal signal peptide occupies residues 1-24; the sequence is MGIPVGKSMLVLLISLAFALCCIA. Residues 25-52 are b; it reads AYGPGETLCGGELVDTLQFVCSDRGFYF. 3 cysteine pairs are disulfide-bonded: C33/C71, C45/C84, and C70/C75. The c stretch occupies residues 53 to 64; sequence SRPSSRANRRSR. Positions 65 to 85 are a; that stretch reads GIVEECCFRSCDLALLETYCA. A d region spans residues 86–91; that stretch reads TPAKSE. Positions 92–180 are cleaved as a propeptide — e peptide; sequence RDVSTSQAVL…ASSEMSSNHQ (89 aa). The interval 157 to 180 is disordered; the sequence is PLIVLPPKDPAHGGASSEMSSNHQ.

This sequence belongs to the insulin family. As to quaternary structure, interacts with MYORG; this interaction is required for IGF2 secretion. Interacts with integrins ITGAV:ITGB3 and ITGA6:ITGB4; integrin-binding is required for IGF2 signaling. Interacts with IGFBP2. In terms of processing, proteolytically processed by PCSK4, proIGF2 is cleaved at Arg-128 and Arg-92 to generate big-IGF2 and mature IGF2. Expressed in the heart, blood serum, kidney and skeletal muscle including the tibialis anterior muscle.

It is found in the secreted. Its function is as follows. The insulin-like growth factors possess growth-promoting activity. Major fetal growth hormone in mammals. Plays a key role in regulating fetoplacental development. IGF2 is influenced by placental lactogen. Also involved in tissue differentiation. In adults, involved in glucose metabolism in adipose tissue, skeletal muscle and liver. Acts as a ligand for integrin which is required for IGF2 signaling. Positively regulates myogenic transcription factor MYOD1 function by facilitating the recruitment of transcriptional coactivators, thereby controlling muscle terminal differentiation. Inhibits myoblast differentiation and modulates metabolism via increasing the mitochondrial respiration rate. Preptin undergoes glucose-mediated co-secretion with insulin, and acts as a physiological amplifier of glucose-mediated insulin secretion. Exhibits osteogenic properties by increasing osteoblast mitogenic activity through phosphoactivation of MAPK1 and MAPK3. The polypeptide is Insulin-like growth factor 2 (Mus musculus (Mouse)).